Consider the following 626-residue polypeptide: DNA mismatch repair protein MutL (626 aa).

It belongs to the DNA mismatch repair MutL/HexB family.

Its function is as follows. This protein is involved in the repair of mismatches in DNA. It is required for dam-dependent methyl-directed DNA mismatch repair. May act as a 'molecular matchmaker', a protein that promotes the formation of a stable complex between two or more DNA-binding proteins in an ATP-dependent manner without itself being part of a final effector complex. In Cellvibrio japonicus (strain Ueda107) (Pseudomonas fluorescens subsp. cellulosa), this protein is DNA mismatch repair protein MutL.